The following is a 202-amino-acid chain: Guanylate kinase (202 aa).

Residues 3 to 181 (GNLFIITAPS…ALEDLRAIIR (179 aa)) enclose the Guanylate kinase-like domain. 10–17 (APSGAGKT) is an ATP binding site.

It belongs to the guanylate kinase family.

It is found in the cytoplasm. It catalyses the reaction GMP + ATP = GDP + ADP. Functionally, essential for recycling GMP and indirectly, cGMP. The protein is Guanylate kinase of Methylobacillus flagellatus (strain ATCC 51484 / DSM 6875 / VKM B-1610 / KT).